A 225-amino-acid chain; its full sequence is Futalosine hydrolase (225 aa).

This sequence belongs to the PNP/UDP phosphorylase family. Futalosine hydrolase subfamily. Homotetramer.

The enzyme catalyses futalosine + H2O = dehypoxanthine futalosine + hypoxanthine. The protein operates within quinol/quinone metabolism; menaquinone biosynthesis. Its activity is regulated as follows. No enhancing of inhibitory effects are observed with divalent metal ions. Slightly inhibited by hypoxanthine. Catalyzes the hydrolysis of futalosine (FL) to dehypoxanthine futalosine (DHFL) and hypoxanthine, a step in the biosynthesis of menaquinone (MK, vitamin K2). Is highly specific to futalosine since it does not accept aminodeoxyfutalosine (AFL), or any structurally related nucleotides and nucleosides as substrate. This Thermus thermophilus (strain ATCC 27634 / DSM 579 / HB8) protein is Futalosine hydrolase.